We begin with the raw amino-acid sequence, 253 residues long: MICMYRIEVEDLNVYFDEAHILKDINLKIPKNTVTALIGPSGCGKSTFIRTLNRMNDVISGFRHEGHVYLDGKDIYDPDMDVVELRKKVGMVFQKPNPFPKSIFENVAYGLRVHGYDDRDFIEERVEESLRAAALWDEVKDKLDKSALGLSGGQQQRLCIARTIAIEPEVILMDEPCSALDPISTTKIEDLIHKLKNDYTIIIVTHNMQQATRVSKYTAFFLHGEIVESGLTEQIFIEPRDKRTEDYITGRFG.

An ABC transporter domain is found at 7–248; the sequence is IEVEDLNVYF…PRDKRTEDYI (242 aa). Residue 39-46 participates in ATP binding; the sequence is GPSGCGKS.

It belongs to the ABC transporter superfamily. Phosphate importer (TC 3.A.1.7) family. The complex is composed of two ATP-binding proteins (PstB), two transmembrane proteins (PstC and PstA) and a solute-binding protein (PstS).

Its subcellular location is the cell membrane. The enzyme catalyses phosphate(out) + ATP + H2O = ADP + 2 phosphate(in) + H(+). In terms of biological role, part of the ABC transporter complex PstSACB involved in phosphate import. Responsible for energy coupling to the transport system. The chain is Phosphate import ATP-binding protein PstB from Methanothermobacter thermautotrophicus (strain ATCC 29096 / DSM 1053 / JCM 10044 / NBRC 100330 / Delta H) (Methanobacterium thermoautotrophicum).